Here is a 411-residue protein sequence, read N- to C-terminus: Argininosuccinate synthase (411 aa).

An ATP-binding site is contributed by 11 to 19; that stretch reads AYSGGLDTS. Y88 is an L-citrulline binding site. G118 contributes to the ATP binding site. T120, N124, and D125 together coordinate L-aspartate. N124 contacts L-citrulline. The L-citrulline site is built by R128, S176, E261, and Y273.

Belongs to the argininosuccinate synthase family. Type 1 subfamily. Homotetramer.

It is found in the cytoplasm. It carries out the reaction L-citrulline + L-aspartate + ATP = 2-(N(omega)-L-arginino)succinate + AMP + diphosphate + H(+). It participates in amino-acid biosynthesis; L-arginine biosynthesis; L-arginine from L-ornithine and carbamoyl phosphate: step 2/3. The sequence is that of Argininosuccinate synthase from Lactiplantibacillus plantarum (strain ATCC BAA-793 / NCIMB 8826 / WCFS1) (Lactobacillus plantarum).